The sequence spans 96 residues: MYKDIDSHQRDSRTDGHQDGFKKNPNFRFFKKKTCKFCDMDRVPDYKEFDFLKKFITEQGKILPRRITGTSAKHQRRLALEIKKARYMALLPFVKK.

Basic and acidic residues predominate over residues Met1–Lys22. A disordered region spans residues Met1–Pro25.

The protein belongs to the bacterial ribosomal protein bS18 family. Part of the 30S ribosomal subunit. Forms a tight heterodimer with protein bS6.

Binds as a heterodimer with protein bS6 to the central domain of the 16S rRNA, where it helps stabilize the platform of the 30S subunit. This is Small ribosomal subunit protein bS18 from Borrelia duttonii (strain Ly).